Reading from the N-terminus, the 256-residue chain is MLSRVVLSAAATAASSLKNAAFLGPGVLQATRTFHTGQPHLAPVPPLPEYGGKVRYGLIPEEFFQFLYPKTGVTGPYVLGTGLILYALSKEIYVISAETFTALSLIGVMVYGIKKYGPAVADFADKLNEQKLAQLEEAKQTSIQQIQNAIDMEKSQQALVQKRHYLFDVQRNNIAMALEVTYRERLYRVYKEVKNRLDYHIYVQNMMRQKEQEHMVNWVEKHVVQSISTQQEKETIAKCIADLKLLAKKAQAQPVM.

Residues 1 to 42 (MLSRVVLSAAATAASSLKNAAFLGPGVLQATRTFHTGQPHLA) constitute a mitochondrion transit peptide. Lys-131 carries the N6-succinyllysine modification. Residues Lys-139, Lys-154, Lys-162, Lys-221, Lys-233, and Lys-244 each carry the N6-acetyllysine modification.

It belongs to the eukaryotic ATPase B chain family. In terms of assembly, component of the ATP synthase complex composed at least of ATP5F1A/subunit alpha, ATP5F1B/subunit beta, ATP5MC1/subunit c (homooctomer), MT-ATP6/subunit a, MT-ATP8/subunit 8, ATP5ME/subunit e, ATP5MF/subunit f, ATP5MG/subunit g, ATP5MK/subunit k, ATP5MJ/subunit j, ATP5F1C/subunit gamma, ATP5F1D/subunit delta, ATP5F1E/subunit epsilon, ATP5PF/subunit F6, ATP5PB/subunit b, ATP5PD/subunit d, ATP5PO/subunit OSCP. ATP synthase complex consists of a soluble F(1) head domain (subunits alpha(3) and beta(3)) - the catalytic core - and a membrane F(0) domain - the membrane proton channel (subunits c, a, 8, e, f, g, k and j). These two domains are linked by a central stalk (subunits gamma, delta, and epsilon) rotating inside the F1 region and a stationary peripheral stalk (subunits F6, b, d, and OSCP).

It localises to the mitochondrion. Its subcellular location is the mitochondrion inner membrane. In terms of biological role, subunit b, of the mitochondrial membrane ATP synthase complex (F(1)F(0) ATP synthase or Complex V) that produces ATP from ADP in the presence of a proton gradient across the membrane which is generated by electron transport complexes of the respiratory chain. ATP synthase complex consist of a soluble F(1) head domain - the catalytic core - and a membrane F(1) domain - the membrane proton channel. These two domains are linked by a central stalk rotating inside the F(1) region and a stationary peripheral stalk. During catalysis, ATP synthesis in the catalytic domain of F(1) is coupled via a rotary mechanism of the central stalk subunits to proton translocation. In vivo, can only synthesize ATP although its ATP hydrolase activity can be activated artificially in vitro. Part of the complex F(0) domain. Part of the complex F(0) domain and the peripheric stalk, which acts as a stator to hold the catalytic alpha(3)beta(3) subcomplex and subunit a/ATP6 static relative to the rotary elements. This chain is ATP synthase peripheral stalk subunit b, mitochondrial, found in Pongo abelii (Sumatran orangutan).